A 24-amino-acid chain; its full sequence is Protein YahV (24 aa).

The chain crosses the membrane as a helical span at residues 4–24 (ILLNVLNIVFIGIAIILVIIC).

The protein resides in the cell inner membrane. The chain is Protein YahV from Escherichia coli (strain K12).